The chain runs to 507 residues: MAALRVGTRAVEGRFQASNGGGGGGGGMAPSSRLVAAHREAKPRSSHSAAPWKLPRRRAGAMPLWRVAVFASVALNVATLALLLHHYATSPPPHHHHHDAGLATRSSDAAVHRRARTASSMAPSTGKPAVTTDSVINLDHGDPTMFEEFWRETGDAAEVVIPGWQTMSYFSDVTNVCWFLEPELDRQVRRLHRVVGNAAVDGYHVLVGTGSTQLFMAALYALAPDAAAAAAGEPISVVSTAPYYSSYPAVTDFLRSGLFRWAGDADAFKGDSYIELVCSPNNPDGAIREAVLDPKTGNGRTVHDLAYYWPQYTPITKRASHDIMLFTVSKSTGHAGTRIGWALVKDRAIARKMTKFVELNTIGVSKDSQMRAAKVLAAVSDGYERRPEQTKETMTTPLRLFDFGRRKMVERWSMLRAAAAASGIFSLPEETSGFCNFTKETAATNPAFAWLRCDREDVEDCAGFLRGHKILTRSGAQFGADARYVRVSMLDRDDAFDIFINRLSSLK.

The segment at 91–135 (PPPHHHHHDAGLATRSSDAAVHRRARTASSMAPSTGKPAVTTDSV) is disordered. Residues Tyr169, 211-212 (ST), Asn282, 304-307 (DLAY), 327-330 (TVSK), and Arg338 contribute to the pyridoxal 5'-phosphate site. The residue at position 330 (Lys330) is an N6-(pyridoxal phosphate)lysine.

This sequence belongs to the alliinase family. The cofactor is pyridoxal 5'-phosphate. Widely expressed.

The enzyme catalyses L-tryptophan + 2-oxoglutarate = indole-3-pyruvate + L-glutamate. Its pathway is plant hormone metabolism; auxin biosynthesis. Functionally, probable tryptophan aminotransferase involved in auxin (IAA) biosynthesis. Required for auxin production to initiate multiple change in growth in response to environmental and developmental cues. Functions upstream of YUCCA1 in auxin biosynthesis. Required for polar auxin transport. The polypeptide is Tryptophan aminotransferase-related protein 2 (Oryza sativa subsp. japonica (Rice)).